Consider the following 376-residue polypeptide: 2-hydroxypropyl-CoM lyase (376 aa).

Zn(2+) contacts are provided by H218, C220, and C341.

The protein belongs to the vitamin-B12 independent methionine synthase family. Homohexamer. Component I of the aliphatic epoxide carboxylation complex together with components II, III and IV. Zn(2+) is required as a cofactor.

It carries out the reaction (R)-2-hydroxypropyl-coenzyme M = (R)-1,2-epoxypropane + coenzyme M. It catalyses the reaction (S)-2-hydroxypropyl-coenzyme M = (S)-1,2-epoxypropane + coenzyme M. The protein operates within alkene metabolism; propylene degradation. Inhibited by methylepoxypropane. Inhibited by the zinc chelator 4-(2-pyridylazo)resorcinol (PAR), in the presence of p- (hydroxymercuri)benzenesulfonic acid (PMPS), and by EDTA. Not inhibited by the coenzyme M analog 2-bromoethanesulfonate (BES). Its function is as follows. Involved in aliphatic epoxide carboxylation. Catalyzes the addition of coenzyme M (CoM) to either R- or S-epoxypropane to form the thioether conjugate 2-hydroxypropyl-CoM. Catalyzes the reaction of CoM with R-epoxypropane at a rate approximately twice of that with S-epoxypropane. The CoM analogs 2-mercaptopropionate, 2-mercaptoethanol and cysteine substitute poorly for CoM as the thiol substrate. This Xanthobacter autotrophicus (strain ATCC BAA-1158 / Py2) protein is 2-hydroxypropyl-CoM lyase.